The following is a 453-amino-acid chain: Probable phenylalanine--tRNA ligase, mitochondrial (453 aa).

A mitochondrion-targeting transit peptide spans 1–27 (MLLTLRVQGARHWLKSTRCLASSAAPA). Substrate contacts are provided by residues 142–145 (TAHQ), Arg164, 171–173 (THY), 178–180 (QAD), Glu285, and Phe310. The FDX-ACB domain occupies 356–453 (SHYPQCTNDL…SVDSFNVQIR (98 aa)).

The protein belongs to the class-II aminoacyl-tRNA synthetase family.

It is found in the mitochondrion matrix. The catalysed reaction is tRNA(Phe) + L-phenylalanine + ATP = L-phenylalanyl-tRNA(Phe) + AMP + diphosphate + H(+). Its function is as follows. Is responsible for the charging of tRNA(Phe) with phenylalanine in mitochondrial translation. This chain is Probable phenylalanine--tRNA ligase, mitochondrial, found in Drosophila melanogaster (Fruit fly).